The sequence spans 101 residues: Apolipoprotein C-II (101 aa).

The signal sequence occupies residues 1–17 (MGTRFLLALCLVLLVLG). Residues 66-74 (AVDEKLRDL) are lipid binding. Residues 78–101 (STAAMSTYTGIFTDQVLSVLKGEE) form a lipoprotein lipase cofactor region.

Belongs to the apolipoprotein C2 family. Proapolipoprotein C-II is synthesized as a sialic acid containing glycoprotein which is subsequently desialylated prior to its proteolytic processing. Post-translationally, proapolipoprotein C-II, the major form found in plasma undergoes proteolytic cleavage of its N-terminal hexapeptide to generate apolipoprotein C-II, which occurs as the minor form in plasma.

The protein localises to the secreted. Functionally, component of chylomicrons, very low-density lipoproteins (VLDL), low-density lipoproteins (LDL), and high-density lipoproteins (HDL) in plasma. Plays an important role in lipoprotein metabolism as an activator of lipoprotein lipase. Both proapolipoprotein C-II and apolipoprotein C-II can activate lipoprotein lipase. The sequence is that of Apolipoprotein C-II (APOC2) from Chlorocebus sabaeus (Green monkey).